Reading from the N-terminus, the 932-residue chain is Protocadherin gamma-A8 (932 aa).

The first 29 residues, methionine 1 to glycine 29, serve as a signal peptide directing secretion. Cadherin domains lie at glutamine 30 to phenylalanine 133, glutamine 134 to phenylalanine 242, proline 243 to valine 347, isoleucine 348 to phenylalanine 452, proline 453 to isoleucine 562, and aspartate 570 to valine 682. At glutamine 30–tyrosine 692 the chain is on the extracellular side. Asparagine 47 carries N-linked (GlcNAc...) asparagine glycosylation. Residues asparagine 414, asparagine 419, and asparagine 545 are each glycosylated (N-linked (GlcNAc...) asparagine). N-linked (GlcNAc...) asparagine glycosylation is present at asparagine 685. A helical membrane pass occupies residues leucine 693–glycine 713. The Cytoplasmic portion of the chain corresponds to leucine 714–lysine 932. Disordered stretches follow at residues alanine 804–asparagine 841 and alanine 902–lysine 932. The segment covering alanine 810 to asparagine 841 has biased composition (polar residues). Positions asparagine 922 to lysine 932 are enriched in basic residues.

Its subcellular location is the cell membrane. Functionally, potential calcium-dependent cell-adhesion protein. May be involved in the establishment and maintenance of specific neuronal connections in the brain. The chain is Protocadherin gamma-A8 (PCDHGA8) from Homo sapiens (Human).